A 219-amino-acid chain; its full sequence is Histone H1.11R (219 aa).

Low complexity-rich tracts occupy residues 1 to 20 (MAET…AAKA) and 28 to 40 (AAGG…PAGP). 2 disordered regions span residues 1–42 (MAET…GPSV) and 89–219 (LVSK…AKKK). Residues 38–111 (AGPSVTELIT…GASGSFRLSK (74 aa)) enclose the H15 domain. Composition is skewed to basic residues over residues 121 to 135 (PKKK…KAAA), 143 to 160 (KKPK…KAKK), 168 to 183 (KSVK…KKAV), and 192 to 219 (KAVK…AKKK).

It belongs to the histone H1/H5 family.

It localises to the nucleus. The protein localises to the chromosome. Its function is as follows. Histones H1 are necessary for the condensation of nucleosome chains into higher-order structures. The sequence is that of Histone H1.11R from Gallus gallus (Chicken).